Consider the following 474-residue polypeptide: Bifunctional ribulose 5-phosphate reductase/CDP-ribitol pyrophosphorylase Bcs1 (474 aa).

Positions 1–238 are ribitol-5-phosphate cytidylyltransferase; sequence MNKNKNIGII…DKLFQSRSHF (238 aa). The ribulose-5-phosphate reductase stretch occupies residues 250 to 474; sequence YDMKDQVLVV…ITNILADLYK (225 aa).

The protein in the N-terminal section; belongs to the IspD/TarI cytidylyltransferase family. This sequence in the C-terminal section; belongs to the short-chain dehydrogenases/reductases (SDR) family. Monomer.

The catalysed reaction is D-ribitol 5-phosphate + CTP + H(+) = CDP-L-ribitol + diphosphate. It carries out the reaction D-ribitol 5-phosphate + NADP(+) = D-ribulose 5-phosphate + NADPH + H(+). The protein operates within capsule biogenesis; capsule polysaccharide biosynthesis. Catalyzes the NADPH-dependent reduction of D-ribulose 5-phosphate to D-ribitol 5-phosphate and the further reaction of D-ribitol 5-phosphate with CTP to form CDP-ribitol. The chain is Bifunctional ribulose 5-phosphate reductase/CDP-ribitol pyrophosphorylase Bcs1 from Haemophilus influenzae.